The following is a 441-amino-acid chain: ATP-dependent protease ATPase subunit HslU (441 aa).

Residues Ile18, 60–65, Asp254, Glu319, and Arg391 each bind ATP; that span reads GVGKTE.

Belongs to the ClpX chaperone family. HslU subfamily. A double ring-shaped homohexamer of HslV is capped on each side by a ring-shaped HslU homohexamer. The assembly of the HslU/HslV complex is dependent on binding of ATP.

The protein localises to the cytoplasm. In terms of biological role, ATPase subunit of a proteasome-like degradation complex; this subunit has chaperone activity. The binding of ATP and its subsequent hydrolysis by HslU are essential for unfolding of protein substrates subsequently hydrolyzed by HslV. HslU recognizes the N-terminal part of its protein substrates and unfolds these before they are guided to HslV for hydrolysis. The protein is ATP-dependent protease ATPase subunit HslU of Shewanella piezotolerans (strain WP3 / JCM 13877).